The following is a 711-amino-acid chain: Myb-like protein B (711 aa).

The segment covering 24-50 (QPQQSIQQQQQQQQQQQQQQQQQQQQQ) has biased composition (low complexity). Disordered stretches follow at residues 24–70 (QPQQ…SPQL) and 113–235 (NYHT…IINN). Composition is skewed to polar residues over residues 113–139 (NYHT…SPPT) and 148–157 (TPLSSSTGFS). 2 stretches are compositionally biased toward low complexity: residues 158–187 (NNNN…NNNI) and 198–235 (NNYP…IINN). HTH myb-type domains are found at residues 428 to 490 (RESI…SPEI) and 491 to 542 (KKGS…SRQT). DNA-binding regions (H-T-H motif) lie at residues 462-486 (WKKI…KRVL) and 514-538 (WKNV…KAIM). One can recognise a Myb-like domain in the interval 540–598 (RQTEWNQLEDDILTKKIKLMTQNNEKISFQQVSKHLARAKTTKIPRTALECKSRWSQLN). The tract at residues 598–640 (NSTNVNNNNNNNNNSITTSSSNTNQQQQSTMVTPTSSPLSSPI) is disordered.

It is found in the nucleus. Its function is as follows. Transcriptional activator that initiates multicellular development by induction of adenylyl cyclase expression. This is Myb-like protein B (mybB) from Dictyostelium discoideum (Social amoeba).